Consider the following 212-residue polypeptide: Nuclear phosphoprotein UL3 homolog (212 aa).

The protein belongs to the alphaherpesvirinae HHV-1 UL3 family. Post-translationally, phosphorylated.

Its subcellular location is the host nucleus. This Equus caballus (Horse) protein is Nuclear phosphoprotein UL3 homolog.